We begin with the raw amino-acid sequence, 358 residues long: DnaJ homolog subfamily B member 11 (358 aa).

Residues 1 to 22 (MAPQNLGTFCLLLLYLIGTVIA) form the signal peptide. The region spanning 25–90 (DFYKILGVPR…EKRKQYDTYG (66 aa)) is the J domain. Threonine 188 is modified (phosphothreonine). Asparagine 261 carries an N-linked (GlcNAc...) asparagine glycan.

As to quaternary structure, part of a large chaperone multiprotein complex comprising DNAJB11, HSP90B1, HSPA5, HYOU, PDIA2, PDIA4, PDIA6, PPIB, SDF2L1, UGGT1 and very small amounts of ERP29, but not, or at very low levels, CALR nor CANX. Binds to denatured substrates in an ATP-independent manner. Interacts via the J domain with HSPA5 in an ATP-dependent manner. Contains high-mannose Endo H-sensitive carbohydrates. In terms of processing, cys-169, Cys-171, Cys-193 and Cys-196 form intramolecular disulfide bonds. The preferential partner for each Cys is not known.

It is found in the endoplasmic reticulum lumen. Functionally, as a co-chaperone for HSPA5 it is required for proper folding, trafficking or degradation of proteins. Binds directly to both unfolded proteins that are substrates for ERAD and nascent unfolded peptide chains, but dissociates from the HSPA5-unfolded protein complex before folding is completed. May help recruiting HSPA5 and other chaperones to the substrate. Stimulates HSPA5 ATPase activity. It is necessary for maturation and correct trafficking of PKD1. This chain is DnaJ homolog subfamily B member 11 (DNAJB11), found in Bos taurus (Bovine).